The following is a 447-amino-acid chain: Bifunctional protein GlmU (447 aa).

Residues 1–225 (MLTVAILAAG…NGELQGINNR (225 aa)) are pyrophosphorylase. UDP-N-acetyl-alpha-D-glucosamine is bound by residues 7 to 10 (LAAG), K21, Q73, and 78 to 79 (GT). D103 contacts Mg(2+). UDP-N-acetyl-alpha-D-glucosamine is bound by residues G140, E154, N169, and N223. N223 serves as a coordination point for Mg(2+). A linker region spans residues 226–246 (VQLSKCEETIQNLIKEKHMLG). An N-acetyltransferase region spans residues 247–447 (GVTFINPASC…QVNIENWKKN (201 aa)). UDP-N-acetyl-alpha-D-glucosamine contacts are provided by R328 and K346. H358 serves as the catalytic Proton acceptor. UDP-N-acetyl-alpha-D-glucosamine is bound by residues Y361 and N372. 3 residues coordinate acetyl-CoA: A375, A418, and R435.

In the N-terminal section; belongs to the N-acetylglucosamine-1-phosphate uridyltransferase family. The protein in the C-terminal section; belongs to the transferase hexapeptide repeat family. In terms of assembly, homotrimer. Mg(2+) is required as a cofactor.

It localises to the cytoplasm. It catalyses the reaction alpha-D-glucosamine 1-phosphate + acetyl-CoA = N-acetyl-alpha-D-glucosamine 1-phosphate + CoA + H(+). It carries out the reaction N-acetyl-alpha-D-glucosamine 1-phosphate + UTP + H(+) = UDP-N-acetyl-alpha-D-glucosamine + diphosphate. It participates in nucleotide-sugar biosynthesis; UDP-N-acetyl-alpha-D-glucosamine biosynthesis; N-acetyl-alpha-D-glucosamine 1-phosphate from alpha-D-glucosamine 6-phosphate (route II): step 2/2. The protein operates within nucleotide-sugar biosynthesis; UDP-N-acetyl-alpha-D-glucosamine biosynthesis; UDP-N-acetyl-alpha-D-glucosamine from N-acetyl-alpha-D-glucosamine 1-phosphate: step 1/1. Its pathway is bacterial outer membrane biogenesis; LPS lipid A biosynthesis. In terms of biological role, catalyzes the last two sequential reactions in the de novo biosynthetic pathway for UDP-N-acetylglucosamine (UDP-GlcNAc). The C-terminal domain catalyzes the transfer of acetyl group from acetyl coenzyme A to glucosamine-1-phosphate (GlcN-1-P) to produce N-acetylglucosamine-1-phosphate (GlcNAc-1-P), which is converted into UDP-GlcNAc by the transfer of uridine 5-monophosphate (from uridine 5-triphosphate), a reaction catalyzed by the N-terminal domain. The protein is Bifunctional protein GlmU of Prochlorococcus marinus (strain MIT 9515).